Here is a 373-residue protein sequence, read N- to C-terminus: UDP-N-acetylglucosamine--N-acetylmuramyl-(pentapeptide) pyrophosphoryl-undecaprenol N-acetylglucosamine transferase (373 aa).

UDP-N-acetyl-alpha-D-glucosamine is bound by residues 13–15 (TGG), Asn-124, Arg-165, Ser-192, and Gln-293.

Belongs to the glycosyltransferase 28 family. MurG subfamily.

The protein resides in the cell inner membrane. The enzyme catalyses di-trans,octa-cis-undecaprenyl diphospho-N-acetyl-alpha-D-muramoyl-L-alanyl-D-glutamyl-meso-2,6-diaminopimeloyl-D-alanyl-D-alanine + UDP-N-acetyl-alpha-D-glucosamine = di-trans,octa-cis-undecaprenyl diphospho-[N-acetyl-alpha-D-glucosaminyl-(1-&gt;4)]-N-acetyl-alpha-D-muramoyl-L-alanyl-D-glutamyl-meso-2,6-diaminopimeloyl-D-alanyl-D-alanine + UDP + H(+). The protein operates within cell wall biogenesis; peptidoglycan biosynthesis. Its function is as follows. Cell wall formation. Catalyzes the transfer of a GlcNAc subunit on undecaprenyl-pyrophosphoryl-MurNAc-pentapeptide (lipid intermediate I) to form undecaprenyl-pyrophosphoryl-MurNAc-(pentapeptide)GlcNAc (lipid intermediate II). This chain is UDP-N-acetylglucosamine--N-acetylmuramyl-(pentapeptide) pyrophosphoryl-undecaprenol N-acetylglucosamine transferase, found in Sinorhizobium fredii (strain NBRC 101917 / NGR234).